Reading from the N-terminus, the 461-residue chain is ATP synthase subunit beta 2 (461 aa).

Residue 151-158 coordinates ATP; the sequence is GGAGVGKT.

Belongs to the ATPase alpha/beta chains family. In terms of assembly, F-type ATPases have 2 components, CF(1) - the catalytic core - and CF(0) - the membrane proton channel. CF(1) has five subunits: alpha(3), beta(3), gamma(1), delta(1), epsilon(1). CF(0) has three main subunits: a(1), b(2) and c(9-12). The alpha and beta chains form an alternating ring which encloses part of the gamma chain. CF(1) is attached to CF(0) by a central stalk formed by the gamma and epsilon chains, while a peripheral stalk is formed by the delta and b chains.

It localises to the cell inner membrane. It carries out the reaction ATP + H2O + 4 H(+)(in) = ADP + phosphate + 5 H(+)(out). Produces ATP from ADP in the presence of a proton gradient across the membrane. The catalytic sites are hosted primarily by the beta subunits. The chain is ATP synthase subunit beta 2 from Vibrio campbellii (strain ATCC BAA-1116).